Reading from the N-terminus, the 270-residue chain is Secreted RxLR effector protein 149 (270 aa).

Residues 1–21 form the signal peptide; that stretch reads MRNGVVLFGLFFIGYSSCVLA. The RxLR-dEER motif lies at 43 to 58; it reads RTLQADDPERILAEER.

It belongs to the RxLR effector family.

It is found in the secreted. It localises to the host nucleus. The protein resides in the host cytoplasm. In terms of biological role, secreted effector that completely suppresses the host cell death induced by cell death-inducing proteins. The sequence is that of Secreted RxLR effector protein 149 from Plasmopara viticola (Downy mildew of grapevine).